Reading from the N-terminus, the 405-residue chain is mRNA cap guanine-N(7) methyltransferase (405 aa).

Residues 1-78 (MDNILNPEDN…PRLEEGHGSL (78 aa)) form a disordered region. 2 stretches are compositionally biased toward polar residues: residues 9–18 (DNVSQTNTET) and 36–45 (KFTASGQNLD). The span at 58-75 (KAGEPESPSKRPRLEEGH) shows a compositional bias: basic and acidic residues. Positions 97–404 (SRIFHLRNFN…IYLLFAFEKQ (308 aa)) constitute an mRNA cap 0 methyltransferase domain. 106–107 (NN) serves as a coordination point for mRNA. Residues lysine 110, glycine 134, aspartate 156, aspartate 190, glutamine 213, and tyrosine 218 each coordinate S-adenosyl-L-methionine.

This sequence belongs to the class I-like SAM-binding methyltransferase superfamily. mRNA cap 0 methyltransferase family.

The protein resides in the nucleus. The enzyme catalyses a 5'-end (5'-triphosphoguanosine)-ribonucleoside in mRNA + S-adenosyl-L-methionine = a 5'-end (N(7)-methyl 5'-triphosphoguanosine)-ribonucleoside in mRNA + S-adenosyl-L-homocysteine. Functionally, catalytic subunit of the mRNA-capping methyltransferase RNMT:RAMAC complex that methylates the N7 position of the added guanosine to the 5'-cap structure of mRNAs. Binds RNA containing 5'-terminal GpppC. This is mRNA cap guanine-N(7) methyltransferase (rnmt) from Xenopus tropicalis (Western clawed frog).